The sequence spans 407 residues: Tryptophan synthase beta chain (407 aa).

At lysine 91 the chain carries N6-(pyridoxal phosphate)lysine.

The protein belongs to the TrpB family. Tetramer of two alpha and two beta chains. Pyridoxal 5'-phosphate is required as a cofactor.

The enzyme catalyses (1S,2R)-1-C-(indol-3-yl)glycerol 3-phosphate + L-serine = D-glyceraldehyde 3-phosphate + L-tryptophan + H2O. It participates in amino-acid biosynthesis; L-tryptophan biosynthesis; L-tryptophan from chorismate: step 5/5. Functionally, the beta subunit is responsible for the synthesis of L-tryptophan from indole and L-serine. The polypeptide is Tryptophan synthase beta chain (Streptococcus pneumoniae (strain P1031)).